The sequence spans 39 residues: Natriuretic peptide TNPc (39 aa).

Cys-9 and Cys-25 are oxidised to a cystine.

The protein belongs to the natriuretic peptide family. In terms of tissue distribution, expressed by the venom gland.

The protein localises to the secreted. In terms of biological role, snake venom natriuretic peptide that exhibits vasoactive and hypotensive activity. Produces a near complete relaxation in pre-contracted aortae by activating the natriuretic peptide receptor 1 (NPR1). Stimulates cGMP production through the natriuretic peptide receptor 1 (NPR1) with high potencies for the rat NPR1 (EC(50)=100 nM), and very weak potencies over human NPR1 (28% activation at 10 uM). In vivo, reduces both systolic and diastolic blood pressure with no effect on heart rate, when intravenously injected in conscious rabbits. Also enhances the bradycardia due to cardiac afferent stimulation (Bezold-Jarisch reflex). The chain is Natriuretic peptide TNPc from Oxyuranus microlepidotus (Inland taipan).